The following is a 115-amino-acid chain: MAGTVLGVGAGVFILALLWVAVLLLCVLLSRASGAARFSVIFLFFGAVIITSVLLLFPRAGEFPAPEVEVKIVDDFFIGRYVLLAFLSAIFLGGLFLVLIHYVLEPIYAKPLHSY.

Transmembrane regions (helical) follow at residues valine 5–leucine 25, phenylalanine 38–proline 58, and tyrosine 81–histidine 101.

The protein belongs to the TMEM218 family. Interacts with TMEM67.

It is found in the membrane. It localises to the cell projection. The protein resides in the cilium. Its function is as follows. May be involved in ciliary biogenesis or function. The chain is Transmembrane protein 218 (TMEM218) from Homo sapiens (Human).